The primary structure comprises 355 residues: F-box protein At1g31080 (355 aa).

The F-box domain maps to 4–49; that stretch reads GANSASIPNDLILEILSRLPAKSTGRFRCVSKLWGSMLCHSYFTEL. The segment covering 306–320 has biased composition (polar residues); it reads AGTSRSPPKQSTSTS. The interval 306–333 is disordered; that stretch reads AGTSRSPPKQSTSTSSREDHEVRTLAHQ. Residues 321 to 333 show a composition bias toward basic and acidic residues; that stretch reads SREDHEVRTLAHQ.

This Arabidopsis thaliana (Mouse-ear cress) protein is F-box protein At1g31080.